Here is a 186-residue protein sequence, read N- to C-terminus: Superoxide dismutase [Cu-Zn] (186 aa).

The N-terminal stretch at 1 to 20 (MKKTVLALMFSCGMVASAFA) is a signal peptide. 3 residues coordinate Cu cation: His-79, His-81, and His-104. A disulfide bridge links Cys-86 with Cys-182. Zn(2+) is bound by residues His-104, His-113, His-122, and Asp-125. Cu cation is bound at residue His-160.

The protein belongs to the Cu-Zn superoxide dismutase family. In terms of assembly, homodimer. Cu cation is required as a cofactor. It depends on Zn(2+) as a cofactor.

Its subcellular location is the periplasm. The enzyme catalyses 2 superoxide + 2 H(+) = H2O2 + O2. Its function is as follows. Destroys radicals which are normally produced within the cells and which are toxic to biological systems. The chain is Superoxide dismutase [Cu-Zn] (sodC) from Pasteurella multocida (strain Pm70).